Reading from the N-terminus, the 340-residue chain is Phenylalanine--tRNA ligase alpha subunit (340 aa).

Mg(2+) is bound at residue Glu-255.

The protein belongs to the class-II aminoacyl-tRNA synthetase family. Phe-tRNA synthetase alpha subunit type 1 subfamily. In terms of assembly, tetramer of two alpha and two beta subunits. The cofactor is Mg(2+).

Its subcellular location is the cytoplasm. The catalysed reaction is tRNA(Phe) + L-phenylalanine + ATP = L-phenylalanyl-tRNA(Phe) + AMP + diphosphate + H(+). This chain is Phenylalanine--tRNA ligase alpha subunit, found in Moorella thermoacetica (strain ATCC 39073 / JCM 9320).